The sequence spans 1009 residues: Protein-tyrosine kinase 2-beta (1009 aa).

Positions 39-359 (RILKVCFYSN…GYCRLQGEHK (321 aa)) constitute an FERM domain. Residues Ser-361, Ser-375, and Ser-399 each carry the phosphoserine modification. Tyr-402 bears the Phosphotyrosine; by autocatalysis mark. The region spanning 425–683 (VVLNRILGEG…ELVCSLSDIY (259 aa)) is the Protein kinase domain. ATP is bound by residues 431–439 (LGEGFFGEV), Lys-457, and 503–509 (ELYPYGE). Catalysis depends on Asp-549, which acts as the Proton acceptor. Phosphotyrosine is present on residues Tyr-579, Tyr-580, and Tyr-722. The disordered stretch occupies residues 702-725 (PKILEPTAFQEPPPKPSRPKYKHP). Residue Ser-762 is modified to Phosphoserine. The residue at position 765 (Thr-765) is a Phosphothreonine. The tract at residues 801–1009 (KIKMRQVLDR…VANLAHPPAE (209 aa)) is interaction with TGFB1I1. Tyr-834 carries the phosphotyrosine modification. Ser-839 is subject to Phosphoserine. Phosphothreonine is present on Thr-842. Tyr-849 carries the phosphotyrosine modification. Residue Ser-866 is modified to Phosphoserine. Residues 868 to 1009 (QPTANLDRTD…VANLAHPPAE (142 aa)) form a focal adhesion targeting (FAT) region. Residue Tyr-881 is modified to Phosphotyrosine.

This sequence belongs to the protein kinase superfamily. Tyr protein kinase family. FAK subfamily. As to quaternary structure, homodimer, or homooligomer. Interacts with NPHP1, ASAP1, ASAP2, ARHGAP26, SKAP2 and TGFB1I1. The Tyr-402 phosphorylated form interacts with SRC (via SH2 domain) and SRC family members. Forms a signaling complex with EPHA1, LCK and phosphatidylinositol 3-kinase; upon activation by EFNA1. Interacts with GRB2 (via SH2 domain). Interacts with P53/TP53 and MDM2. Interacts with MYLK. Interacts with BCAR1. Interacts with RB1CC1. Interacts with RHOU. Interacts with VAV1. Interacts with PDPK1. Interacts with LPXN and PTPN12. Interacts with SIRPA and SH2D3C. Interacts (hypophosphorylated) with PXN. Interacts with ARHGAP10. Interacts with KCNA2. In terms of processing, phosphorylated on tyrosine residues in response to various stimuli that elevate the intracellular calcium concentration; this activation is indirect and may be mediated by production of reactive oxygen species (ROS). Tyr-402 is the major autophosphorylation site, but other kinases can also phosphorylate Tyr-402. Autophosphorylation occurs in trans, i.e. one subunit of the dimeric receptor phosphorylates tyrosine residues on the other subunit. Phosphorylation at Tyr-402 promotes interaction with SRC and SRC family members, leading to phosphorylation at Tyr-579; Tyr-580 and Tyr-881. Phosphorylation at Tyr-881 is important for interaction with GRB2. Phosphorylated on tyrosine residues upon activation of FGR and PKC. Recruitment by NPHP1 to cell matrix adhesions initiates Tyr-402 phosphorylation. In monocytes, adherence to substrata is required for tyrosine phosphorylation and kinase activation. Angiotensin II, thapsigargin and L-alpha-lysophosphatidic acid (LPA) also induce autophosphorylation and increase kinase activity. Phosphorylation by MYLK promotes ITGB2 activation and is thus essential to trigger neutrophil transmigration during lung injury. Dephosphorylated by PTPN12. Highly expressed in pulmonary vein endothelial cells, lung and brain (at protein level). Isoform 1 is expressed at high levels in the brain (hippocampus, cerebral cortex and olfactory bulb) and poorly in the spleen and other tissues, whereas isoforms 2 and 3 are expressed in the spleen and brain (highest in cerebellum).

The protein localises to the cytoplasm. It localises to the perinuclear region. The protein resides in the cell membrane. It is found in the cell projection. Its subcellular location is the lamellipodium. The protein localises to the cell cortex. It localises to the nucleus. The protein resides in the cell junction. It is found in the focal adhesion. It catalyses the reaction L-tyrosyl-[protein] + ATP = O-phospho-L-tyrosyl-[protein] + ADP + H(+). Activated in response to stimuli that lead to increased intracellular Ca(2+) levels; this activation is indirect and may be mediated by calcium-mediated production of reactive oxygen species (ROS). Activated by autophosphorylation at Tyr-402; this creates a binding site for SRC family kinases and leads to phosphorylation at additional tyrosine residues. Phosphorylation at Tyr-402, Tyr-579 and Tyr-580 is required for optimal kinase activity. Its function is as follows. Non-receptor protein-tyrosine kinase that regulates reorganization of the actin cytoskeleton, cell polarization, cell migration, adhesion, spreading and bone remodeling. Plays a role in the regulation of the humoral immune response, and is required for normal levels of marginal B-cells in the spleen and normal migration of splenic B-cells. Required for normal macrophage polarization and migration towards sites of inflammation. Regulates cytoskeleton rearrangement and cell spreading in T-cells, and contributes to the regulation of T-cell responses. Promotes osteoclastic bone resorption; this requires both PTK2B/PYK2 and SRC. May inhibit differentiation and activity of osteoprogenitor cells. Functions in signaling downstream of integrin and collagen receptors, immune receptors, G-protein coupled receptors (GPCR), cytokine, chemokine and growth factor receptors, and mediates responses to cellular stress. Forms multisubunit signaling complexes with SRC and SRC family members upon activation; this leads to the phosphorylation of additional tyrosine residues, creating binding sites for scaffold proteins, effectors and substrates. Regulates numerous signaling pathways. Promotes activation of phosphatidylinositol 3-kinase and of the AKT1 signaling cascade. Promotes activation of NOS3. Regulates production of the cellular messenger cGMP. Promotes activation of the MAP kinase signaling cascade, including activation of MAPK1/ERK2, MAPK3/ERK1 and MAPK8/JNK1. Promotes activation of Rho family GTPases, such as RHOA and RAC1. Recruits the ubiquitin ligase MDM2 to P53/TP53 in the nucleus, and thereby regulates P53/TP53 activity, P53/TP53 ubiquitination and proteasomal degradation. Acts as a scaffold, binding to both PDPK1 and SRC, thereby allowing SRC to phosphorylate PDPK1 at 'Tyr-9, 'Tyr-373', and 'Tyr-376'. Promotes phosphorylation of NMDA receptors by SRC family members, and thereby contributes to the regulation of NMDA receptor ion channel activity and intracellular Ca(2+) levels. May also regulate potassium ion transport by phosphorylation of potassium channel subunits. Phosphorylates SRC; this increases SRC kinase activity. Phosphorylates ASAP1, NPHP1, KCNA2 and SHC1. Promotes phosphorylation of ASAP2, RHOU and PXN; this requires both SRC and PTK2/PYK2. The sequence is that of Protein-tyrosine kinase 2-beta (Ptk2b) from Rattus norvegicus (Rat).